The following is a 626-amino-acid chain: Putative L-type lectin-domain containing receptor kinase V.8 (626 aa).

The N-terminal stretch at 1 to 21 (MPSELKVLHIVLVLLYTLSSS) is a signal peptide. The legume-lectin like stretch occupies residues 22-212 (TYNSNGNWTL…SIGAFHYMLS (191 aa)). Over 22–245 (TYNSNGNWTL…PKKSSDRTKK (224 aa)) the chain is Extracellular. N-linked (GlcNAc...) asparagine glycosylation is found at Asn28, Asn59, Asn112, and Asn162. The chain crosses the membrane as a helical span at residues 246 to 266 (ILAVCLTLAVFAVFVASGICF). The Cytoplasmic segment spans residues 267 to 626 (VFYTRHKKVK…LTNSFLSHGR (360 aa)). Residues 303–562 (FKEKQLLGKG…GLLCAHHTEL (260 aa)) form the Protein kinase domain. Residues 309 to 317 (LGKGGFGQV) and Lys332 contribute to the ATP site. Residue Asp429 is the Proton acceptor of the active site.

In the C-terminal section; belongs to the protein kinase superfamily. Ser/Thr protein kinase family. The protein in the N-terminal section; belongs to the leguminous lectin family.

It is found in the cell membrane. The enzyme catalyses L-seryl-[protein] + ATP = O-phospho-L-seryl-[protein] + ADP + H(+). The catalysed reaction is L-threonyl-[protein] + ATP = O-phospho-L-threonyl-[protein] + ADP + H(+). This Arabidopsis thaliana (Mouse-ear cress) protein is Putative L-type lectin-domain containing receptor kinase V.8 (LECRK58).